The chain runs to 359 residues: GTP cyclohydrolase FolE2 (359 aa).

The protein belongs to the GTP cyclohydrolase IV family.

The catalysed reaction is GTP + H2O = 7,8-dihydroneopterin 3'-triphosphate + formate + H(+). It functions in the pathway cofactor biosynthesis; 7,8-dihydroneopterin triphosphate biosynthesis; 7,8-dihydroneopterin triphosphate from GTP: step 1/1. In terms of biological role, converts GTP to 7,8-dihydroneopterin triphosphate. The chain is GTP cyclohydrolase FolE2 from Cereibacter sphaeroides (strain KD131 / KCTC 12085) (Rhodobacter sphaeroides).